An 87-amino-acid polypeptide reads, in one-letter code: MVNMKASMFLTFAGLVLLFVVCYASESEEKEFPKEMLSSIFAVDNDFKQEERDCAGYMRECKEKLCCSGYVCSSRWKWCVSPAPWRR.

Residues 1–24 form the signal peptide; that stretch reads MVNMKASMFLTFAGLVLLFVVCYA. Positions 25-52 are excised as a propeptide; that stretch reads SESEEKEFPKEMLSSIFAVDNDFKQEER. 3 cysteine pairs are disulfide-bonded: Cys54–Cys67, Cys61–Cys72, and Cys66–Cys79.

The protein belongs to the neurotoxin 10 (Hwtx-1) family. 51 (Hntx-8) subfamily. Hntx-8 sub-subfamily. In terms of tissue distribution, expressed by the venom gland.

Its subcellular location is the secreted. In terms of biological role, ion channel inhibitor. The protein is U3-theraphotoxin-Hhn1j of Cyriopagopus hainanus (Chinese bird spider).